Consider the following 278-residue polypeptide: Complement C1q tumor necrosis factor-related protein 6 (278 aa).

The first 46 residues, 1-46 (MQWLRVRESPGEATGHRVTMGTAALGPVWAALLLFLLMCEIPMVEL), serve as a signal peptide directing secretion. Asn91 carries an N-linked (GlcNAc...) asparagine glycan. In terms of domain architecture, Collagen-like spans 97-138 (GDKGDPGPMGLPGYMGREGPQGEPGPQGSKGDKGEMGSPGAP). The disordered stretch occupies residues 99–135 (KGDPGPMGLPGYMGREGPQGEPGPQGSKGDKGEMGSP). The C1q domain occupies 139-259 (CQKRFFAFSV…KRQRENAIYS (121 aa)).

It is found in the secreted. This is Complement C1q tumor necrosis factor-related protein 6 (C1QTNF6) from Homo sapiens (Human).